Consider the following 156-residue polypeptide: Small ribosomal subunit protein uS7 (156 aa).

It belongs to the universal ribosomal protein uS7 family. Part of the 30S ribosomal subunit. Contacts proteins S9 and S11.

Its function is as follows. One of the primary rRNA binding proteins, it binds directly to 16S rRNA where it nucleates assembly of the head domain of the 30S subunit. Is located at the subunit interface close to the decoding center, probably blocks exit of the E-site tRNA. The sequence is that of Small ribosomal subunit protein uS7 from Renibacterium salmoninarum (strain ATCC 33209 / DSM 20767 / JCM 11484 / NBRC 15589 / NCIMB 2235).